Reading from the N-terminus, the 1166-residue chain is DEAD-box ATP-dependent RNA helicase 42 (1166 aa).

Basic and acidic residues-rich tracts occupy residues methionine 1–aspartate 12 and aspartate 21–arginine 45. The segment at methionine 1–aspartate 460 is disordered. Residues aspartate 14–arginine 95 are a coiled coil. The segment covering serine 59–glutamate 70 has biased composition (acidic residues). Residues glutamate 80 to arginine 95 show a composition bias toward basic residues. Acidic residues predominate over residues serine 101–glutamate 110. A compositionally biased stretch (basic and acidic residues) spans arginine 111–glycine 206. Residues arginine 130 to glutamate 302 adopt a coiled-coil conformation. The residue at position 210 (serine 210) is a Phosphoserine. A compositionally biased stretch (basic and acidic residues) spans glutamate 224–alanine 314. Residue serine 324 is modified to Phosphoserine. Basic and acidic residues-rich tracts occupy residues glutamate 344 to aspartate 357 and methionine 416 to lysine 426. Positions lysine 529 to threonine 557 match the Q motif motif. One can recognise a Helicase ATP-binding domain in the interval leucine 560–isoleucine 738. Alanine 573–threonine 580 serves as a coordination point for ATP. The DEAD box motif lies at aspartate 686 to aspartate 689. A Helicase C-terminal domain is found at aspartate 749–alanine 910.

It belongs to the DEAD box helicase family. DDX46/PRP5 subfamily.

Its subcellular location is the nucleus. The catalysed reaction is ATP + H2O = ADP + phosphate + H(+). Helicase required for pre-mRNA splicing, cold-responsive gene regulation and cold tolerance. This chain is DEAD-box ATP-dependent RNA helicase 42 (RH42), found in Arabidopsis thaliana (Mouse-ear cress).